The primary structure comprises 368 residues: Mitogen-activated protein kinase HOG1B (368 aa).

The Protein kinase domain occupies 20 to 299 (YVNLEPVGMG…ASQALAHPYL (280 aa)). Residues 26-34 (VGMGAFGLV) and Lys-49 contribute to the ATP site. Asp-141 functions as the Proton acceptor in the catalytic mechanism. Thr-171 is modified (phosphothreonine). The TXY signature appears at 171–173 (TGY). Phosphotyrosine is present on Tyr-173.

The protein belongs to the protein kinase superfamily. Ser/Thr protein kinase family. MAP kinase subfamily. HOG1 sub-subfamily. The cofactor is Mg(2+). Phosphorylated. Dually phosphorylated on Thr-171 and Tyr-173, which activates the enzyme. Rapidly dephosphorylated upon either hypo- or hyperosmotic shock.

It is found in the cytoplasm. Its subcellular location is the nucleus. It catalyses the reaction L-seryl-[protein] + ATP = O-phospho-L-seryl-[protein] + ADP + H(+). It carries out the reaction L-threonyl-[protein] + ATP = O-phospho-L-threonyl-[protein] + ADP + H(+). Its activity is regulated as follows. Activated by tyrosine and threonine phosphorylation. Mitogen-activated protein kinase involved in a signal transduction pathway that is activated by changes in the osmolarity of the extracellular environment. Controls osmotic regulation of transcription of target genes. The polypeptide is Mitogen-activated protein kinase HOG1B (HOG1B) (Wallemia ichthyophaga (strain EXF-994 / CBS 113033)).